Reading from the N-terminus, the 280-residue chain is UPF0750 membrane protein YitT (280 aa).

Transmembrane regions (helical) follow at residues 9-29, 54-74, 80-100, and 151-171; these read LLIV…FLIP, FYIS…ILGW, SFTV…GILP, and VGTY…LLQG.

Belongs to the UPF0750 family.

The protein resides in the cell membrane. This Bacillus subtilis (strain 168) protein is UPF0750 membrane protein YitT (yitT).